Consider the following 336-residue polypeptide: Phosphate acyltransferase (336 aa).

The protein belongs to the PlsX family. In terms of assembly, homodimer. Probably interacts with PlsY.

It localises to the cytoplasm. It carries out the reaction a fatty acyl-[ACP] + phosphate = an acyl phosphate + holo-[ACP]. The protein operates within lipid metabolism; phospholipid metabolism. Its function is as follows. Catalyzes the reversible formation of acyl-phosphate (acyl-PO(4)) from acyl-[acyl-carrier-protein] (acyl-ACP). This enzyme utilizes acyl-ACP as fatty acyl donor, but not acyl-CoA. The chain is Phosphate acyltransferase from Pseudomonas putida (strain GB-1).